Reading from the N-terminus, the 586-residue chain is MPKPINVRVTTMDAELEFAIQPNTTGKQLFDQVVKTIGLREVWYFGLQYVDNKGFPTWLKLDKKVSAQEVRKENPVQFKFRAKFYPEDVADELIQDITQKLFFLQVKEGILSDEIYCPPETAVLLGSYAVQAKFGDYNKEMHKSGYLSSERLIPQRVMDQHKLSRDQWEDRIQVWHAEHRGMLKDSAMLEYLKIAQDLEMYGINYFEIKNKKGTDLWLGVDALGLNIYEKDDKLTPKIGFPWSEIRNISFNDKKFVIKPIDKKAPDFVFYAPRLRINKRILQLCMGNHELYMRRRKPDTIEVQQMKAQAREEKHQKQLERQQLETEKKRRETVEREKEQMLREKEELMLRLQDFEQKTKRAEKELSEQIEKALQLEEERRRAQEEAERLEADRMAALRAKEELERQAQDQIKSQEQLAAELAEYTAKIALLEEARRRKEDEVEEWQHRAKEAQDDLVKTKEELHLVMTAPPPPPPPVYEPVNYHVQEGLQDEGAEPMGYSAELSSEGILDDRNEEKRITEAEKNERVQRQLLTLSNELSQARDENKRTHNDIIHNENMRQGRDKYKTLRQIRQGNTKQRIDEFEAM.

The FERM domain maps to 2 to 295; sequence PKPINVRVTT…GNHELYMRRR (294 aa). Lys60 bears the N6-acetyllysine mark. Positions 115 to 120 match the [IL]-x-C-x-x-[DE] motif motif; that stretch reads IYCPPE. Tyr146 carries the phosphotyrosine; by PDGFR modification. Positions 244-586 are interaction with SCYL3; sequence EIRNISFNDK…KQRIDEFEAM (343 aa). Positions 302 to 462 form a coiled coil; that stretch reads VQQMKAQARE…QDDLVKTKEE (161 aa). Residues 306–338 form a disordered region; it reads KAQAREEKHQKQLERQQLETEKKRRETVEREKE. Positions 308–338 are enriched in basic and acidic residues; the sequence is QAREEKHQKQLERQQLETEKKRRETVEREKE. The residue at position 366 (Ser366) is a Phosphoserine. A Phosphotyrosine modification is found at Tyr478. Ser535 carries the phosphoserine modification. Residue Thr567 is modified to Phosphothreonine; by ROCK2 and PKC/PRKCI.

Interacts with PODXL and NHERF2. Found in a complex with EZR, PODXL and NHERF2. Interacts with PALS1. Interacts with MCC, PLEKHG6, SCYL3/PACE1, NHERF1 and TMEM8B. Interacts (when phosphorylated) with FES/FPS. Interacts with dimeric S100P, the interaction may be activating through unmasking of F-actin binding sites. Identified in complexes that contain VIM, EZR, AHNAK, BFSP1, BFSP2, ANK2, PLEC, PRX and spectrin. Detected in a complex composed of at least EZR, AHNAK, PPL and PRX. Interacts with PDPN (via cytoplasmic domain); activates RHOA and promotes epithelial-mesenchymal transition. Interacts with SPN/CD43 cytoplasmic tail, CD44 and ICAM2. Interacts with SLC9A3; interaction targets SLC9A3 to the apical membrane. Interacts with SLC9A1; regulates interactions of SLC9A1 with cytoskeletal and promotes stress fiber formation. Interacts with CLIC5; may work together in a complex which also includes RDX and MYO6 to stabilize linkages between the plasma membrane and subjacent actin cytoskeleton at the base of stereocilia. Post-translationally, phosphorylated by tyrosine-protein kinases. Phosphorylation by ROCK2 suppresses the head-to-tail association of the N-terminal and C-terminal halves resulting in an opened conformation which is capable of actin and membrane-binding. In terms of processing, S-nitrosylation is induced by interferon-gamma and oxidatively-modified low-densitity lipoprotein (LDL(ox)) possibly implicating the iNOS-S100A8/9 transnitrosylase complex. As to expression, glomerular epithelium cell (podocyte). Expressed in cerebrum, cerebellum and hippocampus (at protein level). Expressed in the small intestine, lung, kidney and ovaries.

The protein localises to the apical cell membrane. The protein resides in the cell projection. Its subcellular location is the microvillus membrane. It is found in the ruffle membrane. It localises to the cytoplasm. The protein localises to the cell cortex. The protein resides in the cytoskeleton. Its subcellular location is the microvillus. Its activity is regulated as follows. A head-to-tail association, of the N-terminal and C-terminal halves results in a closed conformation (inactive form) which is incapable of actin or membrane-binding. Probably involved in connections of major cytoskeletal structures to the plasma membrane. In epithelial cells, required for the formation of microvilli and membrane ruffles on the apical pole. Along with PLEKHG6, required for normal macropinocytosis. The sequence is that of Ezrin (Ezr) from Rattus norvegicus (Rat).